The sequence spans 256 residues: UPF0280 protein MTH_727 (256 aa).

This sequence belongs to the UPF0280 family.

This Methanothermobacter thermautotrophicus (strain ATCC 29096 / DSM 1053 / JCM 10044 / NBRC 100330 / Delta H) (Methanobacterium thermoautotrophicum) protein is UPF0280 protein MTH_727.